A 186-amino-acid polypeptide reads, in one-letter code: ATP synthase subunit delta (186 aa).

Belongs to the ATPase delta chain family. As to quaternary structure, F-type ATPases have 2 components, F(1) - the catalytic core - and F(0) - the membrane proton channel. F(1) has five subunits: alpha(3), beta(3), gamma(1), delta(1), epsilon(1). F(0) has three main subunits: a(1), b(2) and c(10-14). The alpha and beta chains form an alternating ring which encloses part of the gamma chain. F(1) is attached to F(0) by a central stalk formed by the gamma and epsilon chains, while a peripheral stalk is formed by the delta and b chains.

It is found in the cell inner membrane. Functionally, f(1)F(0) ATP synthase produces ATP from ADP in the presence of a proton or sodium gradient. F-type ATPases consist of two structural domains, F(1) containing the extramembraneous catalytic core and F(0) containing the membrane proton channel, linked together by a central stalk and a peripheral stalk. During catalysis, ATP synthesis in the catalytic domain of F(1) is coupled via a rotary mechanism of the central stalk subunits to proton translocation. Its function is as follows. This protein is part of the stalk that links CF(0) to CF(1). It either transmits conformational changes from CF(0) to CF(1) or is implicated in proton conduction. This Bradyrhizobium diazoefficiens (strain JCM 10833 / BCRC 13528 / IAM 13628 / NBRC 14792 / USDA 110) protein is ATP synthase subunit delta.